Reading from the N-terminus, the 139-residue chain is MNKLKVSQNNYLQRSDFYKFERNGTEWEYIFASNSACLDYNNNTAVNNDIISSLNYCISDDRYYETAAMCVVLKLSQDCSFDVRLQRSGNGPYKNIWDMPCGELQQHIGYKNGICYNSENTVLSAVGVEHRYHKSVSRL.

This is an uncharacterized protein from Saccharomyces cerevisiae (strain ATCC 204508 / S288c) (Baker's yeast).